Here is a 241-residue protein sequence, read N- to C-terminus: MIIPSIDLIEGNIVRLYQGNYDTKTFYQNNIYDIALKYYNQGAKIVHLVDLDGALCPNNKQTSLIKNLLNYFNFHIQVGGGIRSYKDVETLLLNGAKRVVIGSSAINNITEVEKWLLEFGYKSIVLALDVYVRNNGYKEVVINGWKNRSNVSLESVLERFSTLGIKYVLCTDVKKDGTCLGPNFTLYKNISKLFKNVCFQLSGGIGTISDVISAKKSGIKDIIIGRALLENKFSLLEAIRC.

Asp7 serves as the catalytic Proton acceptor. Asp129 functions as the Proton donor in the catalytic mechanism.

It belongs to the HisA/HisF family.

It is found in the cytoplasm. It catalyses the reaction 1-(5-phospho-beta-D-ribosyl)-5-[(5-phospho-beta-D-ribosylamino)methylideneamino]imidazole-4-carboxamide = 5-[(5-phospho-1-deoxy-D-ribulos-1-ylimino)methylamino]-1-(5-phospho-beta-D-ribosyl)imidazole-4-carboxamide. Its pathway is amino-acid biosynthesis; L-histidine biosynthesis; L-histidine from 5-phospho-alpha-D-ribose 1-diphosphate: step 4/9. This chain is 1-(5-phosphoribosyl)-5-[(5-phosphoribosylamino)methylideneamino] imidazole-4-carboxamide isomerase, found in Buchnera aphidicola subsp. Baizongia pistaciae (strain Bp).